The chain runs to 300 residues: Cation-efflux pump FieF (300 aa).

Helical transmembrane passes span 12–32 (AAIAATAMASLLLLIKIFAWW), 39–59 (ILAALVDSLVDIGASLTNLLV), 82–102 (AALAQSMFISGSALFLFLTGI), and 114–134 (PGVGVIVTIVALICTIILVSF). Residues Asp45 and Asp49 each coordinate Zn(2+). Zn(2+)-binding residues include His153 and Asp157. 2 helical membrane-spanning segments follow: residues 156-176 (SDVMMNGAILLALGLSWYGWH) and 178-198 (ADALFALGIGIYILYSALRMG).

Belongs to the cation diffusion facilitator (CDF) transporter (TC 2.A.4) family. FieF subfamily. Homodimer.

Its subcellular location is the cell inner membrane. The catalysed reaction is Zn(2+)(in) + H(+)(out) = Zn(2+)(out) + H(+)(in). The enzyme catalyses Cd(2+)(in) + H(+)(out) = Cd(2+)(out) + H(+)(in). It catalyses the reaction Fe(2+)(in) + H(+)(out) = Fe(2+)(out) + H(+)(in). Divalent metal cation transporter which exports Zn(2+), Cd(2+) and possibly Fe(2+). May be involved in zinc and iron detoxification by efflux. This is Cation-efflux pump FieF from Escherichia coli O157:H7 (strain EC4115 / EHEC).